We begin with the raw amino-acid sequence, 406 residues long: Testis-specific Y-encoded-like protein 4 (406 aa).

Disordered regions lie at residues M1–G63, G81–K121, E161–R189, and V387–G406. A compositionally biased stretch (polar residues) spans N8–H20. Low complexity predominate over residues D93–D102. Basic and acidic residues predominate over residues Q167–P188.

The protein belongs to the nucleosome assembly protein (NAP) family.

The chain is Testis-specific Y-encoded-like protein 4 (Tspyl4) from Mus musculus (Mouse).